Consider the following 576-residue polypeptide: RING finger and SPRY domain-containing protein 1 (576 aa).

A signal peptide spans 1–16; the sequence is MIVFGWAVFLASRSLG. The residue at position 50 (Ser-50) is a Phosphoserine. The tract at residues 50 to 99 is disordered; that stretch reads SGTDDSVDTQQQQAENSAVPTADTRSQPRDPVRPPRRGRGPHEPRRKKQN. A compositionally biased stretch (polar residues) spans 57 to 68; sequence DTQQQQAENSAV. A compositionally biased stretch (basic residues) spans 83-97; it reads PPRRGRGPHEPRRKK. Residues 300 to 483 enclose the B30.2/SPRY domain; sequence LFLKEGRQLT…CEFNFGAKPF (184 aa). N-linked (GlcNAc...) asparagine glycosylation is present at Asn-314. An RING-type zinc finger spans residues 527-562; that stretch reads CSLCCDEVADTQLKPCGHSDLCMDCALQLETCPLCR.

The protein resides in the secreted. This Pongo abelii (Sumatran orangutan) protein is RING finger and SPRY domain-containing protein 1 (RSPRY1).